Here is a 155-residue protein sequence, read N- to C-terminus: Ribosomal RNA large subunit methyltransferase H (155 aa).

S-adenosyl-L-methionine-binding positions include L72, G103, and 122–127; that span reads LSALTL.

Belongs to the RNA methyltransferase RlmH family. Homodimer.

The protein resides in the cytoplasm. The catalysed reaction is pseudouridine(1915) in 23S rRNA + S-adenosyl-L-methionine = N(3)-methylpseudouridine(1915) in 23S rRNA + S-adenosyl-L-homocysteine + H(+). Its function is as follows. Specifically methylates the pseudouridine at position 1915 (m3Psi1915) in 23S rRNA. In Cronobacter sakazakii (strain ATCC BAA-894) (Enterobacter sakazakii), this protein is Ribosomal RNA large subunit methyltransferase H.